A 121-amino-acid chain; its full sequence is Large ribosomal subunit protein uL14 (121 aa).

The protein belongs to the universal ribosomal protein uL14 family. As to quaternary structure, part of the 50S ribosomal subunit. Forms a cluster with proteins L3 and L19. In the 70S ribosome, L14 and L19 interact and together make contacts with the 16S rRNA in bridges B5 and B8.

Binds to 23S rRNA. Forms part of two intersubunit bridges in the 70S ribosome. In Prochlorococcus marinus (strain MIT 9515), this protein is Large ribosomal subunit protein uL14.